Consider the following 251-residue polypeptide: tRNA (guanine-N(7)-)-methyltransferase (251 aa).

S-adenosyl-L-methionine contacts are provided by E80, E105, D132, and D155. D155 is an active-site residue. Substrate contacts are provided by residues K159, D191, and 228 to 231; that span reads TKFE.

It belongs to the class I-like SAM-binding methyltransferase superfamily. TrmB family.

It carries out the reaction guanosine(46) in tRNA + S-adenosyl-L-methionine = N(7)-methylguanosine(46) in tRNA + S-adenosyl-L-homocysteine. It functions in the pathway tRNA modification; N(7)-methylguanine-tRNA biosynthesis. Catalyzes the formation of N(7)-methylguanine at position 46 (m7G46) in tRNA. This chain is tRNA (guanine-N(7)-)-methyltransferase, found in Histophilus somni (strain 2336) (Haemophilus somnus).